Reading from the N-terminus, the 340-residue chain is Ketol-acid reductoisomerase (NADP(+)) (340 aa).

Positions Val-3–Thr-182 constitute a KARI N-terminal Rossmann domain. NADP(+) contacts are provided by residues Tyr-26–Gln-29, Arg-49, Ser-53, and Asp-83–Gln-86. His-108 is an active-site residue. Gly-134 provides a ligand contact to NADP(+). The KARI C-terminal knotted domain maps to Thr-183–Val-328. Asp-191, Glu-195, Glu-227, and Glu-231 together coordinate Mg(2+). Position 252 (Ser-252) interacts with substrate.

Belongs to the ketol-acid reductoisomerase family. Mg(2+) is required as a cofactor.

It carries out the reaction (2R)-2,3-dihydroxy-3-methylbutanoate + NADP(+) = (2S)-2-acetolactate + NADPH + H(+). The enzyme catalyses (2R,3R)-2,3-dihydroxy-3-methylpentanoate + NADP(+) = (S)-2-ethyl-2-hydroxy-3-oxobutanoate + NADPH + H(+). The protein operates within amino-acid biosynthesis; L-isoleucine biosynthesis; L-isoleucine from 2-oxobutanoate: step 2/4. It participates in amino-acid biosynthesis; L-valine biosynthesis; L-valine from pyruvate: step 2/4. Involved in the biosynthesis of branched-chain amino acids (BCAA). Catalyzes an alkyl-migration followed by a ketol-acid reduction of (S)-2-acetolactate (S2AL) to yield (R)-2,3-dihydroxy-isovalerate. In the isomerase reaction, S2AL is rearranged via a Mg-dependent methyl migration to produce 3-hydroxy-3-methyl-2-ketobutyrate (HMKB). In the reductase reaction, this 2-ketoacid undergoes a metal-dependent reduction by NADPH to yield (R)-2,3-dihydroxy-isovalerate. The polypeptide is Ketol-acid reductoisomerase (NADP(+)) (Streptococcus thermophilus (strain ATCC BAA-491 / LMD-9)).